Here is a 289-residue protein sequence, read N- to C-terminus: Deleted in azoospermia-like (289 aa).

The tract at residues 1-20 (MSANAEAQCGSISEDNTHSS) is disordered. The 82-residue stretch at 36–117 (NTVFVGGIDI…PAIRKQQNLC (82 aa)) folds into the RRM domain. The DAZ domain maps to 162–187 (TYAYSSPAVLIQQQVPVGYQPAYNYQ).

The protein belongs to the RRM DAZ family.

Its subcellular location is the cytoplasm. Functionally, RNA-binding protein, which probably plays a central role in gametogenesis in both males and females. Acts by binding to the 3'-UTR of mRNA, specifically recognizing GUU triplets, and promoting the translation of key transcripts. This chain is Deleted in azoospermia-like (DAZL), found in Gallus gallus (Chicken).